A 274-amino-acid polypeptide reads, in one-letter code: 4-hydroxy-tetrahydrodipicolinate reductase (274 aa).

NAD(+)-binding positions include 11-16 and Glu37; that span reads GGSGRM. Arg38 serves as a coordination point for NADP(+). NAD(+) is bound by residues 101 to 103 and 125 to 128; these read GTT and APNM. His158 functions as the Proton donor/acceptor in the catalytic mechanism. His159 serves as a coordination point for (S)-2,3,4,5-tetrahydrodipicolinate. Lys162 functions as the Proton donor in the catalytic mechanism. 168–169 is a binding site for (S)-2,3,4,5-tetrahydrodipicolinate; the sequence is GT.

Belongs to the DapB family.

It localises to the cytoplasm. It catalyses the reaction (S)-2,3,4,5-tetrahydrodipicolinate + NAD(+) + H2O = (2S,4S)-4-hydroxy-2,3,4,5-tetrahydrodipicolinate + NADH + H(+). The catalysed reaction is (S)-2,3,4,5-tetrahydrodipicolinate + NADP(+) + H2O = (2S,4S)-4-hydroxy-2,3,4,5-tetrahydrodipicolinate + NADPH + H(+). Its pathway is amino-acid biosynthesis; L-lysine biosynthesis via DAP pathway; (S)-tetrahydrodipicolinate from L-aspartate: step 4/4. Catalyzes the conversion of 4-hydroxy-tetrahydrodipicolinate (HTPA) to tetrahydrodipicolinate. This is 4-hydroxy-tetrahydrodipicolinate reductase from Shewanella pealeana (strain ATCC 700345 / ANG-SQ1).